Reading from the N-terminus, the 99-residue chain is Phosphoribosyl-ATP pyrophosphatase (99 aa).

It belongs to the PRA-PH family.

Its subcellular location is the cytoplasm. It carries out the reaction 1-(5-phospho-beta-D-ribosyl)-ATP + H2O = 1-(5-phospho-beta-D-ribosyl)-5'-AMP + diphosphate + H(+). Its pathway is amino-acid biosynthesis; L-histidine biosynthesis; L-histidine from 5-phospho-alpha-D-ribose 1-diphosphate: step 2/9. This Methanococcoides burtonii (strain DSM 6242 / NBRC 107633 / OCM 468 / ACE-M) protein is Phosphoribosyl-ATP pyrophosphatase.